The primary structure comprises 216 residues: Holliday junction branch migration complex subunit RuvA (216 aa).

The domain I stretch occupies residues 1–64; that stretch reads MISFIKGVLI…EDAQQLYGFK (64 aa). The segment at 65–143 is domain II; that stretch reads SKVDKKVFQE…KMANEIYAQT (79 aa). Residues 144–163 form a flexible linker region; sequence SGTTTTSQDSQAQQAPTSAV. The domain III stretch occupies residues 164–216; that stretch reads LANSIFNESVDALLALGYKQKDAEKMSRSAMGDATTAAEVIRKALQGSIRSKR.

It belongs to the RuvA family. As to quaternary structure, homotetramer. Forms an RuvA(8)-RuvB(12)-Holliday junction (HJ) complex. HJ DNA is sandwiched between 2 RuvA tetramers; dsDNA enters through RuvA and exits via RuvB. An RuvB hexamer assembles on each DNA strand where it exits the tetramer. Each RuvB hexamer is contacted by two RuvA subunits (via domain III) on 2 adjacent RuvB subunits; this complex drives branch migration. In the full resolvosome a probable DNA-RuvA(4)-RuvB(12)-RuvC(2) complex forms which resolves the HJ.

The protein resides in the cytoplasm. In terms of biological role, the RuvA-RuvB-RuvC complex processes Holliday junction (HJ) DNA during genetic recombination and DNA repair, while the RuvA-RuvB complex plays an important role in the rescue of blocked DNA replication forks via replication fork reversal (RFR). RuvA specifically binds to HJ cruciform DNA, conferring on it an open structure. The RuvB hexamer acts as an ATP-dependent pump, pulling dsDNA into and through the RuvAB complex. HJ branch migration allows RuvC to scan DNA until it finds its consensus sequence, where it cleaves and resolves the cruciform DNA. The chain is Holliday junction branch migration complex subunit RuvA from Francisella tularensis subsp. novicida (strain U112).